The sequence spans 84 residues: Small ribosomal subunit protein bS20 (84 aa).

A compositionally biased stretch (basic residues) spans 62–72; that stretch reads KNKARRLKSRA. The tract at residues 62–84 is disordered; that stretch reads KNKARRLKSRAARWSNSATAASR. Residues 75–84 show a composition bias toward polar residues; that stretch reads WSNSATAASR.

The protein belongs to the bacterial ribosomal protein bS20 family.

Binds directly to 16S ribosomal RNA. The sequence is that of Small ribosomal subunit protein bS20 from Mycoplasmoides gallisepticum (strain R(low / passage 15 / clone 2)) (Mycoplasma gallisepticum).